A 218-amino-acid polypeptide reads, in one-letter code: MDKSESTSAGRNRRRRLRRGSRSAPSSSDANFRVLSQQLSRLNKTLSAGRPTINHPTFVGTERCKPGYTFTSITSKPPKIDRGSYYGKRLLLPDSVTEYDKKLVSRIQIRVNPLPKFDSTVWVTVRKVPASSDLSVPAISAMFPDGPSPVLVYQYAASGVQANNKLLYDLSAMRADIGDMRKYAVLVYAKDDALATDELVLHVDVEHQRIPTSGVLPV.

The residue at position 1 (M1) is an N-acetylmethionine; by host. A compositionally biased stretch (low complexity) spans M1–G10. Positions M1–A30 are disordered. Residues R11 to S21 show a composition bias toward basic residues.

Belongs to the cucumovirus capsid protein family.

Its subcellular location is the virion. Its function is as follows. Capsid protein. Probably binds RNA and plays a role in packaging. This chain is Capsid protein, found in Cucumber mosaic virus (strain Kor) (CMV).